A 111-amino-acid polypeptide reads, in one-letter code: UPF0122 protein YofM (111 aa).

Belongs to the UPF0122 family.

Functionally, might take part in the signal recognition particle (SRP) pathway. This is inferred from the conservation of its genetic proximity to ftsY/ffh. May be a regulatory protein. The sequence is that of UPF0122 protein YofM (yofM) from Lactococcus lactis subsp. lactis (strain IL1403) (Streptococcus lactis).